Here is a 412-residue protein sequence, read N- to C-terminus: Peptidase T (412 aa).

Zn(2+) is bound at residue histidine 83. Aspartate 85 is an active-site residue. Residue aspartate 145 coordinates Zn(2+). Glutamate 179 serves as the catalytic Proton acceptor. The Zn(2+) site is built by glutamate 180, aspartate 202, and histidine 384.

Belongs to the peptidase M20B family. It depends on Zn(2+) as a cofactor.

It localises to the cytoplasm. The enzyme catalyses Release of the N-terminal residue from a tripeptide.. In terms of biological role, cleaves the N-terminal amino acid of tripeptides. This chain is Peptidase T, found in Fusobacterium nucleatum subsp. nucleatum (strain ATCC 25586 / DSM 15643 / BCRC 10681 / CIP 101130 / JCM 8532 / KCTC 2640 / LMG 13131 / VPI 4355).